A 124-amino-acid chain; its full sequence is Large ribosomal subunit protein bL12c (124 aa).

It belongs to the bacterial ribosomal protein bL12 family. Homodimer. Part of the ribosomal stalk of the 50S ribosomal subunit. Forms a multimeric L10(L12)X complex, where L10 forms an elongated spine to which 2 to 4 L12 dimers bind in a sequential fashion. Binds GTP-bound translation factors.

The protein resides in the plastid. It localises to the chloroplast. Forms part of the ribosomal stalk which helps the ribosome interact with GTP-bound translation factors. Is thus essential for accurate translation. The protein is Large ribosomal subunit protein bL12c of Cyanidioschyzon merolae (strain NIES-3377 / 10D) (Unicellular red alga).